The sequence spans 92 residues: MSFLSNIFARRQQSSSVAKDRLQILLAHERGAGEAGESDLIRQLHKEIMEVIARHVAVDQDKVQIKVDRGSGCSMLEIDVEVPQELSGKRGS.

This sequence belongs to the MinE family.

Prevents the cell division inhibition by proteins MinC and MinD at internal division sites while permitting inhibition at polar sites. This ensures cell division at the proper site by restricting the formation of a division septum at the midpoint of the long axis of the cell. The protein is Cell division topological specificity factor of Gluconobacter oxydans (strain 621H) (Gluconobacter suboxydans).